Reading from the N-terminus, the 107-residue chain is Flagellar transcriptional regulator FlhD (107 aa).

The protein belongs to the FlhD family. Homodimer; disulfide-linked. Forms a heterohexamer composed of two FlhC and four FlhD subunits. Each FlhC binds a FlhD dimer, forming a heterotrimer, and a hexamer assembles by dimerization of two heterotrimers.

It localises to the cytoplasm. In terms of biological role, functions in complex with FlhC as a master transcriptional regulator that regulates transcription of several flagellar and non-flagellar operons by binding to their promoter region. Activates expression of class 2 flagellar genes, including fliA, which is a flagellum-specific sigma factor that turns on the class 3 genes. Also regulates genes whose products function in a variety of physiological pathways. The polypeptide is Flagellar transcriptional regulator FlhD (Bordetella pertussis (strain Tohama I / ATCC BAA-589 / NCTC 13251)).